A 260-amino-acid chain; its full sequence is 3-oxoadipate CoA-transferase subunit B (260 aa).

Residue Glu-51 is part of the active site.

Belongs to the 3-oxoacid CoA-transferase subunit B family. In terms of assembly, heterotetramer composed of 2 A and 2 B subunits.

The enzyme catalyses 3-oxoadipate + succinyl-CoA = 3-oxoadipyl-CoA + succinate. It functions in the pathway aromatic compound metabolism; beta-ketoadipate pathway; acetyl-CoA and succinyl-CoA from 3-oxoadipate: step 1/2. The polypeptide is 3-oxoadipate CoA-transferase subunit B (catJ) (Pseudomonas knackmussii (strain DSM 6978 / CCUG 54928 / LMG 23759 / B13)).